We begin with the raw amino-acid sequence, 143 residues long: Large ribosomal subunit protein uL13 (143 aa).

Belongs to the universal ribosomal protein uL13 family. Part of the 50S ribosomal subunit.

Its function is as follows. This protein is one of the early assembly proteins of the 50S ribosomal subunit, although it is not seen to bind rRNA by itself. It is important during the early stages of 50S assembly. This is Large ribosomal subunit protein uL13 from Dehalococcoides mccartyi (strain CBDB1).